The chain runs to 62 residues: Alpha-elapitoxin-Pc1 (62 aa).

4 disulfide bridges follow: C3-C24, C17-C41, C43-C54, and C55-C60.

It belongs to the three-finger toxin family. Short-chain subfamily. Type I alpha-neurotoxin sub-subfamily. Expressed by the venom gland.

The protein resides in the secreted. Bird-specific neurotoxin (tested on chicken) that acts as pseudo-irreversible antagonists at the nicotinic acetylcholine receptor (nAChR) of the skeletal neuromuscular junction. Has no significant effect on the electrically-induced twitches of the rat isolated phrenic nerve-diaphragm preparation. The chain is Alpha-elapitoxin-Pc1 from Pseudechis colletti (Collett's snake).